The following is a 504-amino-acid chain: Anaerobic nitric oxide reductase transcription regulator NorR (504 aa).

D57 carries the 4-aspartylphosphate modification. A Sigma-54 factor interaction domain is found at 187–416 (MIGLSPGMTQ…LEHAIHRAVV (230 aa)). Residues 215–222 (GETGTGKE) and 278–287 (ADNGTLFLDE) each bind ATP. Positions 479–498 (WAACARMLETDVANLHRLAK) form a DNA-binding region, H-T-H motif.

Its pathway is nitrogen metabolism; nitric oxide reduction. Required for the expression of anaerobic nitric oxide (NO) reductase, acts as a transcriptional activator for at least the norVW operon. Activation also requires sigma-54. This Shigella flexneri serotype 5b (strain 8401) protein is Anaerobic nitric oxide reductase transcription regulator NorR.